The chain runs to 316 residues: Pantothenate kinase (316 aa).

Position 95–102 (95–102 (GSVAVGKS)) interacts with ATP.

This sequence belongs to the prokaryotic pantothenate kinase family.

It localises to the cytoplasm. It carries out the reaction (R)-pantothenate + ATP = (R)-4'-phosphopantothenate + ADP + H(+). The protein operates within cofactor biosynthesis; coenzyme A biosynthesis; CoA from (R)-pantothenate: step 1/5. In Shewanella woodyi (strain ATCC 51908 / MS32), this protein is Pantothenate kinase.